The following is a 227-amino-acid chain: Translation initiation factor 6 (227 aa).

It belongs to the eIF-6 family.

Its function is as follows. Binds to the 50S ribosomal subunit and prevents its association with the 30S ribosomal subunit to form the 70S initiation complex. The protein is Translation initiation factor 6 of Methanococcus maripaludis (strain C6 / ATCC BAA-1332).